Here is a 188-residue protein sequence, read N- to C-terminus: Nicotinamide-nucleotide adenylyltransferase (188 aa).

The interval 166–188 (SDSLERYAATGESLPESLDDLDD) is disordered.

It belongs to the archaeal NMN adenylyltransferase family.

The protein localises to the cytoplasm. It catalyses the reaction beta-nicotinamide D-ribonucleotide + ATP + H(+) = diphosphate + NAD(+). It participates in cofactor biosynthesis; NAD(+) biosynthesis; NAD(+) from nicotinamide D-ribonucleotide: step 1/1. The sequence is that of Nicotinamide-nucleotide adenylyltransferase from Haloarcula marismortui (strain ATCC 43049 / DSM 3752 / JCM 8966 / VKM B-1809) (Halobacterium marismortui).